Consider the following 219-residue polypeptide: Response regulator ArlR (219 aa).

The Response regulatory domain occupies 3 to 116 (QILIVEDEQN…ELLARIRAIL (114 aa)). Residue aspartate 52 is modified to 4-aspartylphosphate. Residues 122-219 (KDIIDVNGIT…TVRGVGYVIR (98 aa)) constitute a DNA-binding region (ompR/PhoB-type).

Phosphorylated by ArlS.

It localises to the cytoplasm. Functionally, member of the two-component regulatory system ArlS/ArlR involved in the regulation of adhesion, autolysis, multidrug resistance and virulence. This is Response regulator ArlR (arlR) from Staphylococcus aureus (strain USA300).